Here is a 689-residue protein sequence, read N- to C-terminus: Beta-adrenergic receptor kinase 1 (689 aa).

Positions Met1–Asp190 are N-terminal. Residues Thr54–Cys175 form the RGS domain. The Protein kinase domain maps to Phe191–Phe453. Residues Ile197 to Val205 and Lys220 each bind ATP. Asp317 (proton acceptor) is an active-site residue. One can recognise an AGC-kinase C-terminal domain in the interval Arg454–Val521. One can recognise a PH domain in the interval Asp558–Arg652. At Ser670 the chain carries Phosphoserine.

The protein belongs to the protein kinase superfamily. AGC Ser/Thr protein kinase family. GPRK subfamily. Interacts with the heterodimer formed by GNB1 and GNG2. Interacts with GIT1. Interacts with, and phosphorylates chemokine-stimulated CCR5. Interacts with ARRB1. Interacts with LPAR1 and LPAR2. Interacts with RALA in response to LPAR1 activation. ADRBK1 and RALA mutually inhibit each other's binding to LPAR1. Interacts with ADRB2.

The protein resides in the cytoplasm. It is found in the cell membrane. The protein localises to the postsynapse. Its subcellular location is the presynapse. The enzyme catalyses [beta-adrenergic receptor] + ATP = [beta-adrenergic receptor]-phosphate + ADP + H(+). In contrast to other AGC family kinases, the catalytic activity is solely regulated by the binding of substrates and ligands, not by phosphorylation of the kinase domain. Specifically phosphorylates the agonist-occupied form of the beta-adrenergic and closely related receptors, probably inducing a desensitization of them. Key regulator of LPAR1 signaling. Competes with RALA for binding to LPAR1 thus affecting the signaling properties of the receptor. Desensitizes LPAR1 and LPAR2 in a phosphorylation-independent manner. Positively regulates ciliary smoothened (SMO)-dependent Hedgehog (Hh) signaling pathway by facilitating the trafficking of SMO into the cilium and the stimulation of SMO activity. Inhibits relaxation of airway smooth muscle in response to blue light. The polypeptide is Beta-adrenergic receptor kinase 1 (Mus musculus (Mouse)).